The sequence spans 2289 residues: MRDADKQYFETLESHLEQAFARARQAKGQGYDPKPEVEIPVARDMADRVENILAIPDVAERIRELDDERSREEVALELVTDFVEGTVGDYDTREGKIEGAVRTAVALLTEGVVAAPIEGIDRVEILSDDDGSEFVNVYYAGPIRSAGGTAQALSVLVADYARSLLDIDEYSARTDETERYAEEVSLYDRETGLQYSPKDKETKFITKHMPIMLDGEATGNEEVSGYRDLERVDTNAARGGMCLVLAEGIALKAPKIQRYTRQLAEVEWPWLQDLIDDTIGSDEHSNNSVKNGEADIVKTDKDTNESETEDGIDNDDYNDSGLEPANSPRADATNKYLRDLIAGRPVFGHPSAAGAFRLRYGRARNHGFATAGVHPATMHIVDDFIATGTQLKTERPGKAGGVVPVDSIKGPTVRLANGDVRCINDPEEAEKLQNGVEKILDLGEYLVNFGEFIENNHPLAPAAYVFEWWIQEFEASNADVQALRDDPTVDLESPTFENAMRWAKKHDIPLHPAYTYLWHDISVTEFDHLADAVAAGEITMNEVSDTNSASGNTSLRANTNTDDTLTIDTTPAIRETMERLLIEHHQDSDSIHIPAWRALALSLGIKIESDNDTGIGDRMWSLTDLSKHARKQDDGKSAIAAVNEVAPFQVRERAPTRIGSRMGRPEKSEDRDLSPAVHTLFPIGEAGGNQRNLSDAAQSFGDNTERGQISVQLGKRRCPYCETVGFELQCAECGRHTEPQFVCRECESVLSPDESGRVHCDRCERDVTSAEWQDIDLHQRYRDALDRVDERESSFEILKGVKGLTSSNKTPEPLEKGILRAKHGVSSFKDGTVRYDMTDLPVTAVRPKELDVTAAHFRELGYQTDINGNPLQFDDQLVELKVQDIVLPDGAAEHMMKTADFVDDLLEQFYELNQFYQIDERDDLIGELVFGMAPHTSAAVVGRIVGFTSAAVGYAHPYFHAAKRRNCFHPETKIWFRDTDNEWHHETIQTFVEDRLDDPEIDAVGTLVQEVDDNTDREISVPSIDDNGNERLQSVTAVSKHRAPNHLVQIETISGREITITPDHEMHIFEQGNLVSKQASKITSGEYAVIPKRLQTISPSSHTPQHDLLREFLTRDELTADRLIIHTSDPVRLCNRVFPEEVTSCKDAVEIMQNTACHLDKNKETLIGWLGEGRIPVALLRGFVETDEALLMSIPDDVQIGLRGEKVRIDRHIGFTEELTSLLGYYAAAGIVHTQTNPISYESAQQEQSRITFYNIDTQTQTDLLNALNSVFEIEPIQYNLDGEILGVPGELIRRVFDTVFDVGTQPSHKRIPQALFDASESHITSYLRCFFSTHDSLTTDTRDISATTVSREFKEDIIAALRRLGITAEVTTQQSRSVPEVLPDWYAIDDITHHDADNSLNLTRSYVISIASSDAVTLQRDRQAQEQIKYDAQGLIANNNAIHQSRQVTDGGRKDYITEPITDIEYVDADIDYTYCLTVSETHSLIVNDLSQKQCDGDEDCVMLLMDGLLNFSREYLPDKRGGSVAADSRLVAVSPDDKIVFTTIEDFWKKLNTPIERNGKFRKRTCVSEGWQTYAFDENHEASLRPIEKAIRYTADESEQLRRITTQLGRSLDITDEHSLFRYDDGIEEVAGDDLTAGDIIVAPRTLDVEVTQTTLDLSEYIHDNERCPSEQTGSGELNLASKSAISDSRNKETPGVTHNILPQRSKFTDEMTTLSPTAVGGLESEQNETLRVGESTGAIERYINVDDSFGWLLGQFIAQRSISTDALTMTVHTAAEKHAERIVATSDSVFGIKPTVNSIERGYEIVFPSVFDTIVSGLTAKEQSEPEQDVDHTHTDEIGIPECILHAPDDIVLSFLQGFILAENAQRKGNAASEASEMVSESETTVTLETPSVGVKDGLVFLCHRLGVITDISEKSGEEYSVHFEESRYTVSIATEGKTNPLDQILNGERPTMPEGVSVPVPDALLTIHESIANSPHIDQVIPDTVVQQETVSLETLQSLLTGLSTVDLPAQLEAKRDELTLLTEGDLSYLRVESVECVDYDGYLYDLQVGGEPVFTANWLYAHNSMDAPLVMSSRIDPSEIDDEAHNMDIVRQYPREFYEATRRMEDPDEWEEEVTIAEEYLDTDNEYTGFNHTHDTTDIAAGPDLSAYKTLDSMMDKMDAQLELARKLRAVDETDVAERVIEYHFLPDLIGNLRAFSRQQTRCLDCGESYRRMPLTGECRECGGRVNLTVHEGSVNKYMDTAIHIAEEFDCREYTKQRLEVLERSLESIFEDDTNKQSGIADFM.

2 disordered regions span residues 279 to 330 (IGSD…SPRA) and 544 to 563 (SDTN…NTDD). Positions 292-304 (GEADIVKTDKDTN) are enriched in basic and acidic residues. Residues 305-318 (ESETEDGIDNDDYN) are compositionally biased toward acidic residues. The span at 544 to 557 (SDTNSASGNTSLRA) shows a compositional bias: polar residues. DOD-type homing endonuclease domains are found at residues 1222 to 1367 (LLGY…RLGI) and 1755 to 1911 (LLGQ…RLGV).

This sequence belongs to the archaeal DNA polymerase II family. Heterodimer of a large subunit and a small subunit. Post-translationally, this protein undergoes a protein self splicing that involves a post-translational excision of the intervening region (intein) followed by peptide ligation.

The enzyme catalyses DNA(n) + a 2'-deoxyribonucleoside 5'-triphosphate = DNA(n+1) + diphosphate. The catalysed reaction is Exonucleolytic cleavage in the 3'- to 5'-direction to yield nucleoside 5'-phosphates.. In terms of biological role, possesses two activities: a DNA synthesis (polymerase) and an exonucleolytic activity that degrades single-stranded DNA in the 3'- to 5'-direction. Has a template-primer preference which is characteristic of a replicative DNA polymerase. The protein is DNA polymerase II large subunit of Haloquadratum walsbyi (strain DSM 16790 / HBSQ001).